Consider the following 87-residue polypeptide: MANTPSAKKAVRKIERRTAINKSRRSQMRTYIRKVEEAIASGDAAAATSALQSAAPLVMRAAQKGIVHKNTASRKVSRLSKRVKALA.

The protein belongs to the bacterial ribosomal protein bS20 family.

In terms of biological role, binds directly to 16S ribosomal RNA. The chain is Small ribosomal subunit protein bS20 from Beijerinckia indica subsp. indica (strain ATCC 9039 / DSM 1715 / NCIMB 8712).